Reading from the N-terminus, the 390-residue chain is Odorant receptor 85b (390 aa).

The Cytoplasmic portion of the chain corresponds to 1–30; it reads MEKLMKYASFFYTAVGIRPYTNGEESKMNK. A helical membrane pass occupies residues 31-51; the sequence is LIFHIVFWSNVINLSFVGLFE. Residues 52-66 are Extracellular-facing; it reads SIYVYSAFMDNKFLE. A helical membrane pass occupies residues 67–87; it reads AVTALSYIGFVTVGMSKMFFI. At 88–126 the chain is on the cytoplasmic side; the sequence is RWKKTAITELINELKEIYPNGLIREERYNLPMYLGTCSR. The chain crosses the membrane as a helical span at residues 127–147; that stretch reads ISLIYSLLYSVLIWTFNLFCV. Topologically, residues 148–200 are extracellular; it reads MEYWVYDKWLNIRVVGKQLPYLMYIPWKWQDNWSYYPLLFSQNFAGYTSAAGQ. N-linked (GlcNAc...) asparagine glycosylation is present at asparagine 179. Residues 201-221 traverse the membrane as a helical segment; it reads ISTDVLLCAVATQLVMHFDFL. The Cytoplasmic segment spans residues 222–260; it reads SNSMERHELSGDWKKDSRFLVDIVRYHERILRLSDAVND. Residues 261–281 traverse the membrane as a helical segment; that stretch reads IFGIPLLLNFMVSSFVICFVG. The Extracellular portion of the chain corresponds to 282–291; sequence FQMTVGVPPD. The helical transmembrane segment at 292–312 threads the bilayer; that stretch reads IVVKLFLFLVSSMSQVYLICH. Residues 313 to 360 lie on the Cytoplasmic side of the membrane; sequence YGQLVADASYGFSVATYNQKWYKADVRYKRALVIIIARSQKVTFLKAT. The helical transmembrane segment at 361 to 381 threads the bilayer; sequence IFLDITRSTMTDLLQISYKFF. Residues 382-390 lie on the Extracellular side of the membrane; sequence ALLRTMYTQ.

It belongs to the insect chemoreceptor superfamily. Heteromeric odorant receptor channel (TC 1.A.69) family. Or49a subfamily. As to quaternary structure, interacts with Orco. Complexes exist early in the endomembrane system in olfactory sensory neurons (OSNs), coupling these complexes to the conserved ciliary trafficking pathway. Expressed in olfactory sensory neurons in the antenna.

It localises to the cell membrane. Its function is as follows. Odorant receptor which mediates acceptance or avoidance behavior, depending on its substrates. The odorant receptor repertoire encodes a large collection of odor stimuli that vary widely in identity, intensity, and duration. Forms a complex with Orco to form odorant-sensing units, providing sensitive and prolonged odorant signaling and calcium permeability. Involved in the behavioral responses to 2-heptanone, amyl acetate, and butyl acetate. The polypeptide is Odorant receptor 85b (Or85b) (Drosophila melanogaster (Fruit fly)).